The primary structure comprises 221 residues: Large ribosomal subunit protein uL16A (221 aa).

It belongs to the universal ribosomal protein uL16 family. In terms of assembly, component of the large ribosomal subunit (LSU). Mature yeast ribosomes consist of a small (40S) and a large (60S) subunit. The 40S small subunit contains 1 molecule of ribosomal RNA (18S rRNA) and at least 33 different proteins. The large 60S subunit contains 3 rRNA molecules (25S, 5.8S and 5S rRNA) and at least 46 different proteins.

It localises to the cytoplasm. Component of the ribosome, a large ribonucleoprotein complex responsible for the synthesis of proteins in the cell. The small ribosomal subunit (SSU) binds messenger RNAs (mRNAs) and translates the encoded message by selecting cognate aminoacyl-transfer RNA (tRNA) molecules. The large subunit (LSU) contains the ribosomal catalytic site termed the peptidyl transferase center (PTC), which catalyzes the formation of peptide bonds, thereby polymerizing the amino acids delivered by tRNAs into a polypeptide chain. The nascent polypeptides leave the ribosome through a tunnel in the LSU and interact with protein factors that function in enzymatic processing, targeting, and the membrane insertion of nascent chains at the exit of the ribosomal tunnel. This Schizosaccharomyces pombe (strain 972 / ATCC 24843) (Fission yeast) protein is Large ribosomal subunit protein uL16A (rpl1001).